The primary structure comprises 131 residues: Phosphoribosyl-AMP cyclohydrolase (131 aa).

Asp89 is a binding site for Mg(2+). A Zn(2+)-binding site is contributed by Cys90. 2 residues coordinate Mg(2+): Asp91 and Asp93. Zn(2+)-binding residues include Cys106 and Cys113.

This sequence belongs to the PRA-CH family. As to quaternary structure, homodimer. It depends on Mg(2+) as a cofactor. Zn(2+) is required as a cofactor.

The protein resides in the cytoplasm. It catalyses the reaction 1-(5-phospho-beta-D-ribosyl)-5'-AMP + H2O = 1-(5-phospho-beta-D-ribosyl)-5-[(5-phospho-beta-D-ribosylamino)methylideneamino]imidazole-4-carboxamide. It functions in the pathway amino-acid biosynthesis; L-histidine biosynthesis; L-histidine from 5-phospho-alpha-D-ribose 1-diphosphate: step 3/9. Functionally, catalyzes the hydrolysis of the adenine ring of phosphoribosyl-AMP. This Bifidobacterium longum (strain DJO10A) protein is Phosphoribosyl-AMP cyclohydrolase.